The following is a 626-amino-acid chain: Phosphomethylpyrimidine synthase (626 aa).

Substrate-binding positions include asparagine 237, methionine 266, tyrosine 295, histidine 331, 351 to 353 (SRG), 392 to 395 (DGLR), and glutamate 431. Histidine 435 is a binding site for Zn(2+). Substrate is bound at residue tyrosine 458. Histidine 499 serves as a coordination point for Zn(2+). [4Fe-4S] cluster is bound by residues cysteine 579, cysteine 582, and cysteine 587.

The protein belongs to the ThiC family. As to quaternary structure, homodimer. [4Fe-4S] cluster is required as a cofactor.

The catalysed reaction is 5-amino-1-(5-phospho-beta-D-ribosyl)imidazole + S-adenosyl-L-methionine = 4-amino-2-methyl-5-(phosphooxymethyl)pyrimidine + CO + 5'-deoxyadenosine + formate + L-methionine + 3 H(+). Its pathway is cofactor biosynthesis; thiamine diphosphate biosynthesis. Its function is as follows. Catalyzes the synthesis of the hydroxymethylpyrimidine phosphate (HMP-P) moiety of thiamine from aminoimidazole ribotide (AIR) in a radical S-adenosyl-L-methionine (SAM)-dependent reaction. The chain is Phosphomethylpyrimidine synthase from Cupriavidus necator (strain ATCC 17699 / DSM 428 / KCTC 22496 / NCIMB 10442 / H16 / Stanier 337) (Ralstonia eutropha).